The sequence spans 378 residues: N-acetyllactosaminide beta-1,3-N-acetylglucosaminyltransferase 4 (378 aa).

At 1–28 (MLPPQPSAAHQGRGGRSGLLPKGPAMLC) the chain is on the cytoplasmic side. A helical; Signal-anchor for type II membrane protein transmembrane segment spans residues 29–49 (RLCWLVSYSLAVLLLGCLLFL). At 50–378 (RKAAKPAGDP…KCAAGPIPQR (329 aa)) the chain is on the lumenal side. The segment at 59 to 81 (PTAHQPFWAPPTPRHSRCPPNHT) is disordered. A glycan (N-linked (GlcNAc...) asparagine) is linked at Asn192.

This sequence belongs to the glycosyltransferase 31 family. Mainly expressed in brain tissues such as whole brain, hippocampus, amygdala, cerebellum and caudate nucleus. Also expressed in colon, esophagus and kidney.

It is found in the golgi apparatus membrane. It carries out the reaction a beta-D-galactosyl-(1-&gt;4)-N-acetyl-beta-D-glucosaminyl derivative + UDP-N-acetyl-alpha-D-glucosamine = an N-acetyl-beta-D-glucosaminyl-(1-&gt;3)-beta-D-galactosyl-(1-&gt;4)-N-acetyl-beta-D-glucosaminyl derivative + UDP + H(+). It functions in the pathway protein modification; protein glycosylation. Functionally, beta-1,3-N-acetylglucosaminyltransferase involved in the synthesis of poly-N-acetyllactosamine. Has activity for type 2 oligosaccharides. The chain is N-acetyllactosaminide beta-1,3-N-acetylglucosaminyltransferase 4 (B3GNT4) from Homo sapiens (Human).